The chain runs to 133 residues: Fluoride-specific ion channel FluC (133 aa).

4 helical membrane-spanning segments follow: residues 5 to 25, 43 to 63, 76 to 96, and 108 to 128; these read VPATSLILWLAVALGGALGAL, VATLTVNVLGSFLMGVFYVVI, VIMIGFLGAFTTFSTFSIESL, and ISYVVANVVLSISAVVVAIVL. Positions 83 and 86 each coordinate Na(+).

Belongs to the fluoride channel Fluc/FEX (TC 1.A.43) family.

It is found in the cell inner membrane. The catalysed reaction is fluoride(in) = fluoride(out). Its activity is regulated as follows. Na(+) is not transported, but it plays an essential structural role and its presence is essential for fluoride channel function. Fluoride-specific ion channel. Important for reducing fluoride concentration in the cell, thus reducing its toxicity. This is Fluoride-specific ion channel FluC from Saccharophagus degradans (strain 2-40 / ATCC 43961 / DSM 17024).